The following is a 108-amino-acid chain: UPF0102 protein Sama_3355 (108 aa).

It belongs to the UPF0102 family.

This Shewanella amazonensis (strain ATCC BAA-1098 / SB2B) protein is UPF0102 protein Sama_3355.